A 164-amino-acid chain; its full sequence is Succinate dehydrogenase assembly factor 3, mitochondrial (164 aa).

A mitochondrion-targeting transit peptide spans Met-1–Gly-51. Residues Lys-136–Ala-145 are compositionally biased toward basic and acidic residues. The segment at Lys-136–Ser-164 is disordered. Over residues Val-153–Ser-164 the composition is skewed to polar residues.

The protein belongs to the complex I LYR family. SDHAF3 subfamily. As to quaternary structure, interacts with the iron-sulfur protein subunit within the SDH catalytic dimer.

It is found in the mitochondrion matrix. In terms of biological role, plays an essential role in the assembly of succinate dehydrogenase (SDH), an enzyme complex (also referred to as respiratory complex II) that is a component of both the tricarboxylic acid (TCA) cycle and the mitochondrial electron transport chain, and which couples the oxidation of succinate to fumarate with the reduction of ubiquinone (coenzyme Q) to ubiquinol. Promotes maturation of the iron-sulfur protein subunit of the SDH catalytic dimer, protecting it from the deleterious effects of oxidants. May act together with SDHAF1. In Cryptococcus neoformans var. neoformans serotype D (strain B-3501A) (Filobasidiella neoformans), this protein is Succinate dehydrogenase assembly factor 3, mitochondrial.